The chain runs to 172 residues: Cytochrome c oxidase subunit 4 isoform 2, mitochondrial (172 aa).

Residues M1–R34 constitute a mitochondrion transit peptide. Over residues T13 to T22 the composition is skewed to low complexity. The disordered stretch occupies residues T13–Q32. At M35–N101 the chain is on the mitochondrial matrix side. The chain crosses the membrane as a helical span at residues E102–Y127. Over V128–K172 the chain is Mitochondrial intermembrane.

This sequence belongs to the cytochrome c oxidase IV family. In terms of assembly, component of the cytochrome c oxidase (complex IV, CIV), a multisubunit enzyme composed of 14 subunits. The complex is composed of a catalytic core of 3 subunits MT-CO1, MT-CO2 and MT-CO3, encoded in the mitochondrial DNA, and 11 supernumerary subunits COX4I, COX5A, COX5B, COX6A, COX6B, COX6C, COX7A, COX7B, COX7C, COX8 and NDUFA4, which are encoded in the nuclear genome. The complex exists as a monomer or a dimer and forms supercomplexes (SCs) in the inner mitochondrial membrane with NADH-ubiquinone oxidoreductase (complex I, CI) and ubiquinol-cytochrome c oxidoreductase (cytochrome b-c1 complex, complex III, CIII), resulting in different assemblies (supercomplex SCI(1)III(2)IV(1) and megacomplex MCI(2)III(2)IV(2)).

Its subcellular location is the mitochondrion inner membrane. It participates in energy metabolism; oxidative phosphorylation. In terms of biological role, component of the cytochrome c oxidase, the last enzyme in the mitochondrial electron transport chain which drives oxidative phosphorylation. The respiratory chain contains 3 multisubunit complexes succinate dehydrogenase (complex II, CII), ubiquinol-cytochrome c oxidoreductase (cytochrome b-c1 complex, complex III, CIII) and cytochrome c oxidase (complex IV, CIV), that cooperate to transfer electrons derived from NADH and succinate to molecular oxygen, creating an electrochemical gradient over the inner membrane that drives transmembrane transport and the ATP synthase. Cytochrome c oxidase is the component of the respiratory chain that catalyzes the reduction of oxygen to water. Electrons originating from reduced cytochrome c in the intermembrane space (IMS) are transferred via the dinuclear copper A center (CU(A)) of subunit 2 and heme A of subunit 1 to the active site in subunit 1, a binuclear center (BNC) formed by heme A3 and copper B (CU(B)). The BNC reduces molecular oxygen to 2 water molecules using 4 electrons from cytochrome c in the IMS and 4 protons from the mitochondrial matrix. The sequence is that of Cytochrome c oxidase subunit 4 isoform 2, mitochondrial (Cox4i2) from Mus musculus (Mouse).